A 550-amino-acid polypeptide reads, in one-letter code: MGGNLGCHRSIPKDPTDFCQGKRKFSAACNFSNILVNQERLNINTATEEELMTLPGVNRGVAQNIVEYRDCIGGFKKVEDLALVSGVGATKLEAIKLEICVSSKNSSSNHSPSSLRKEHEHLPCTGVNINTATPPQLMSVRGITEKIAKNIVEFRSVHGPFKSIEDLVKVANINSSLLDRIRFQVFVERSRTPSTNTNGGFTHPSPTSFSVQSDEPDVPLGGPPLVTSVRPCVEPPAGTRDGKPVVRVATWNLQRCSSEKANNPGVKEVVCMTLLENDIKLLAVQDLADREALDKFCAELNQPTLCSVRRWKSARGLWKCAVSEKPNGVSNSAPEFSGFLWDCSSGIEMKDSAVLESFTTNGNGNPHPQPYLGHFYIGSSELTLVNVLLTAAPSPTENKRKSTSDDLKTHKLSSGVQETLKGERDLLVMGHFGVAPDSSEMEILRKEKLSALLAPSVFTNISTRTPQGSRSLDNIWASRSLRKTYTGQCSVVREGLTNPWIPDNWSWGGVASEHCPVVAEFFLDVLKERLCSGPAMPVVERGDSMSKHER.

The region spanning 39–68 is the HhH domain; sequence ERLNINTATEEELMTLPGVNRGVAQNIVEY. Polar residues predominate over residues 194-213; that stretch reads STNTNGGFTHPSPTSFSVQS. The segment at 194–216 is disordered; the sequence is STNTNGGFTHPSPTSFSVQSDEP.

The protein is Endonuclease/exonuclease/phosphatase family domain-containing protein 1 (eepd1) of Danio rerio (Zebrafish).